Reading from the N-terminus, the 309-residue chain is Foldase protein PrsA 2 (309 aa).

An N-terminal signal peptide occupies residues M1–A22. C23 carries N-palmitoyl cysteine lipidation. C23 is lipidated: S-diacylglycerol cysteine. Positions T146–K241 constitute a PpiC domain.

This sequence belongs to the PrsA family.

It localises to the cell membrane. It carries out the reaction [protein]-peptidylproline (omega=180) = [protein]-peptidylproline (omega=0). In terms of biological role, plays a major role in protein secretion by helping the post-translocational extracellular folding of several secreted proteins. This is Foldase protein PrsA 2 from Streptococcus pyogenes serotype M6 (strain ATCC BAA-946 / MGAS10394).